A 146-amino-acid polypeptide reads, in one-letter code: Phospholipase A2 147 (146 aa).

Residues 1–19 (MYPAHLLVLLAVCVSLLGA) form the signal peptide. Residues 20–27 (ASVPPQPL) constitute a propeptide that is removed on maturation. Cystine bridges form between Cys38-Cys98, Cys54-Cys145, Cys56-Cys72, Cys71-Cys126, Cys78-Cys119, Cys87-Cys112, and Cys105-Cys117. Tyr55, Gly57, and Gly59 together coordinate Ca(2+). His75 is an active-site residue. Position 76 (Asp76) interacts with Ca(2+). Residue Asp120 is part of the active site.

It belongs to the phospholipase A2 family. Group I subfamily. D49 sub-subfamily. It depends on Ca(2+) as a cofactor. As to expression, expressed by the venom gland.

It localises to the secreted. It catalyses the reaction a 1,2-diacyl-sn-glycero-3-phosphocholine + H2O = a 1-acyl-sn-glycero-3-phosphocholine + a fatty acid + H(+). In terms of biological role, snake venom phospholipase A2 (PLA2) that inhibits collagen-induced platelet aggregation. PLA2 catalyzes the calcium-dependent hydrolysis of the 2-acyl groups in 3-sn-phosphoglycerides. The polypeptide is Phospholipase A2 147 (Drysdalia coronoides (White-lipped snake)).